Here is a 221-residue protein sequence, read N- to C-terminus: Abscisic acid receptor PYL1 (221 aa).

Low complexity predominate over residues 1 to 11 (MANSESSSSPV). The disordered stretch occupies residues 1–22 (MANSESSSSPVNEEENSQRIST). Residue Ala-2 is modified to N-acetylalanine. The segment at 50 to 206 (YQLGNGRCSS…NLQKLASITE (157 aa)) is START-like. Residues Lys-86, 116–121 (ANTSRE), 143–149 (RLRNYKS), and Glu-171 contribute to the abscisate site. Positions 112 to 116 (SGLPA) match the Gate loop motif. The short motif at 142-144 (HRL) is the Latch loop element.

Belongs to the PYR/PYL/RCAR abscisic acid intracellular receptor family. As to quaternary structure, homodimer. Binds ABA on one subunit only. Interacts with HAB1, ABI1 and ABI2, and possibly with other PP2Cs. Binds to CARs protein in an ABA-independent manner, both at the plasma membrane and in the nucleus. Interacts directly with CAR1 and CAR4.

The protein localises to the cytoplasm. Its subcellular location is the nucleus. It localises to the cell membrane. Receptor for abscisic acid (ABA) required for ABA-mediated responses such as stomatal closure and germination inhibition. Inhibits the activity of group-A protein phosphatases type 2C (PP2Cs) when activated by ABA. Can be activated by both (-)-ABA and (+)-ABA. In Arabidopsis thaliana (Mouse-ear cress), this protein is Abscisic acid receptor PYL1 (PYL1).